The chain runs to 456 residues: Argininosuccinate lyase (456 aa).

Belongs to the lyase 1 family. Argininosuccinate lyase subfamily.

The protein resides in the cytoplasm. The catalysed reaction is 2-(N(omega)-L-arginino)succinate = fumarate + L-arginine. The protein operates within amino-acid biosynthesis; L-arginine biosynthesis; L-arginine from L-ornithine and carbamoyl phosphate: step 3/3. This is Argininosuccinate lyase from Listeria monocytogenes serotype 4a (strain HCC23).